A 255-amino-acid polypeptide reads, in one-letter code: Post-GPI attachment to proteins factor 2 (255 aa).

The next 5 helical transmembrane spans lie at 23 to 43 (LALV…IWSL), 111 to 131 (LGIL…CLSF), 143 to 163 (NAFV…YLLN), 185 to 205 (LFLV…RHNS), and 209 to 229 (AGVY…NMGF).

Belongs to the PGAP2 family.

The protein localises to the golgi apparatus membrane. It is found in the endoplasmic reticulum membrane. In terms of biological role, involved in the lipid remodeling steps of GPI-anchor maturation. Required for stable expression of GPI-anchored proteins at the cell surface. In Drosophila melanogaster (Fruit fly), this protein is Post-GPI attachment to proteins factor 2.